A 102-amino-acid polypeptide reads, in one-letter code: NADH-quinone oxidoreductase subunit K 2 (102 aa).

3 helical membrane-spanning segments follow: residues 1–21, 30–50, and 65–85; these read MIVP…LGLV, IIMM…AFVG, and LMIM…VVYL.

The protein belongs to the complex I subunit 4L family. As to quaternary structure, NDH-1 is composed of 14 different subunits. Subunits NuoA, H, J, K, L, M, N constitute the membrane sector of the complex.

It localises to the cell inner membrane. The catalysed reaction is a quinone + NADH + 5 H(+)(in) = a quinol + NAD(+) + 4 H(+)(out). Functionally, NDH-1 shuttles electrons from NADH, via FMN and iron-sulfur (Fe-S) centers, to quinones in the respiratory chain. The immediate electron acceptor for the enzyme in this species is believed to be ubiquinone. Couples the redox reaction to proton translocation (for every two electrons transferred, four hydrogen ions are translocated across the cytoplasmic membrane), and thus conserves the redox energy in a proton gradient. The protein is NADH-quinone oxidoreductase subunit K 2 of Geotalea daltonii (strain DSM 22248 / JCM 15807 / FRC-32) (Geobacter daltonii).